Reading from the N-terminus, the 238-residue chain is 2,3,4,5-tetrahydropyridine-2,6-dicarboxylate N-acetyltransferase (238 aa).

It belongs to the transferase hexapeptide repeat family. DapH subfamily.

The enzyme catalyses (S)-2,3,4,5-tetrahydrodipicolinate + acetyl-CoA + H2O = L-2-acetamido-6-oxoheptanedioate + CoA. The protein operates within amino-acid biosynthesis; L-lysine biosynthesis via DAP pathway; LL-2,6-diaminopimelate from (S)-tetrahydrodipicolinate (acetylase route): step 1/3. In terms of biological role, catalyzes the transfer of an acetyl group from acetyl-CoA to tetrahydrodipicolinate. The protein is 2,3,4,5-tetrahydropyridine-2,6-dicarboxylate N-acetyltransferase of Pseudothermotoga lettingae (strain ATCC BAA-301 / DSM 14385 / NBRC 107922 / TMO) (Thermotoga lettingae).